We begin with the raw amino-acid sequence, 450 residues long: Chromosomal replication initiator protein DnaA (450 aa).

The segment at 1–76 (MNLNDILKEL…KKILKQPVNI (76 aa)) is domain I, interacts with DnaA modulators. The domain II stretch occupies residues 76–107 (ISFTYEQEYQKQLEKTESINKDHSDIISKKNK). The segment at 108–327 (KVNENTFENF…GSVSRLNFWS (220 aa)) is domain III, AAA+ region. ATP is bound by residues Gly151, Gly153, Lys154, and Thr155. The domain IV, binds dsDNA stretch occupies residues 328–450 (QQNPEEKVIT…DILKNKILTK (123 aa)).

It belongs to the DnaA family. Oligomerizes as a right-handed, spiral filament on DNA at oriC.

It localises to the cytoplasm. Its subcellular location is the cell membrane. Plays an essential role in the initiation and regulation of chromosomal replication. ATP-DnaA binds to the origin of replication (oriC) to initiate formation of the DNA replication initiation complex once per cell cycle. Binds the DnaA box (a 9 base pair repeat at the origin) and separates the double-stranded (ds)DNA. Forms a right-handed helical filament on oriC DNA; dsDNA binds to the exterior of the filament while single-stranded (ss)DNA is stabiized in the filament's interior. The ATP-DnaA-oriC complex binds and stabilizes one strand of the AT-rich DNA unwinding element (DUE), permitting loading of DNA polymerase. After initiation quickly degrades to an ADP-DnaA complex that is not apt for DNA replication. Binds acidic phospholipids. This is Chromosomal replication initiator protein DnaA from Mycoplasma capricolum subsp. capricolum (strain California kid / ATCC 27343 / NCTC 10154).